Consider the following 120-residue polypeptide: NADH dehydrogenase [ubiquinone] 1 subunit C2 (120 aa).

A helical membrane pass occupies residues 57–76 (GLHRQLLFVTSFVFAGYFYL).

The protein belongs to the complex I NDUFC2 subunit family. As to quaternary structure, complex I is composed of 45 different subunits. Interacts with TMEM242.

It localises to the mitochondrion inner membrane. Its function is as follows. Accessory subunit of the mitochondrial membrane respiratory chain NADH dehydrogenase (Complex I), that is believed not to be involved in catalysis but required for the complex assembly. Complex I functions in the transfer of electrons from NADH to the respiratory chain. The immediate electron acceptor for the enzyme is believed to be ubiquinone. This chain is NADH dehydrogenase [ubiquinone] 1 subunit C2, found in Mus musculus (Mouse).